A 109-amino-acid polypeptide reads, in one-letter code: Peptide chaperone MftB (109 aa).

The protein belongs to the peptide chaperone MftB family.

Peptide chaperone involved in the biosynthesis of the enzyme cofactor mycofactocin (MFT). Binds MftA and MftC with high affinity, and is essential for MftC activity on MftA, likely via the formation of a ternary complex. This chain is Peptide chaperone MftB, found in Mycobacterium tuberculosis (strain ATCC 25618 / H37Rv).